The following is a 769-amino-acid chain: Endonuclease MutS2 (769 aa).

Residue 335 to 342 (GGNAGGKT) participates in ATP binding. The 76-residue stretch at 694–769 (IDLRGKRADV…GDGMTEVELV (76 aa)) folds into the Smr domain.

The protein belongs to the DNA mismatch repair MutS family. MutS2 subfamily. In terms of assembly, homodimer. Binds to stalled ribosomes, contacting rRNA.

Endonuclease that is involved in the suppression of homologous recombination and thus may have a key role in the control of bacterial genetic diversity. Functionally, acts as a ribosome collision sensor, splitting the ribosome into its 2 subunits. Detects stalled/collided 70S ribosomes which it binds and splits by an ATP-hydrolysis driven conformational change. Acts upstream of the ribosome quality control system (RQC), a ribosome-associated complex that mediates the extraction of incompletely synthesized nascent chains from stalled ribosomes and their subsequent degradation. Probably generates substrates for RQC. The polypeptide is Endonuclease MutS2 (Maridesulfovibrio salexigens (strain ATCC 14822 / DSM 2638 / NCIMB 8403 / VKM B-1763) (Desulfovibrio salexigens)).